Reading from the N-terminus, the 362-residue chain is Histidinol-phosphate aminotransferase 1 (362 aa).

Lysine 226 carries the post-translational modification N6-(pyridoxal phosphate)lysine.

It belongs to the class-II pyridoxal-phosphate-dependent aminotransferase family. Histidinol-phosphate aminotransferase subfamily. In terms of assembly, homodimer. It depends on pyridoxal 5'-phosphate as a cofactor.

The catalysed reaction is L-histidinol phosphate + 2-oxoglutarate = 3-(imidazol-4-yl)-2-oxopropyl phosphate + L-glutamate. It functions in the pathway amino-acid biosynthesis; L-histidine biosynthesis; L-histidine from 5-phospho-alpha-D-ribose 1-diphosphate: step 7/9. In Dechloromonas aromatica (strain RCB), this protein is Histidinol-phosphate aminotransferase 1.